Reading from the N-terminus, the 508-residue chain is Cyclin-A1-1 (508 aa).

Residues 1–28 show a composition bias toward low complexity; that stretch reads MSSNLAASRRSSSSSSVAAAAAAKRPAV. Disordered stretches follow at residues 1 to 40 and 82 to 125; these read MSSN…GKAA and VKKG…ESVL. A compositionally biased stretch (gly residues) spans 29–39; the sequence is GEGGGGGGGKA. Residues 98 to 111 are compositionally biased toward low complexity; it reads ASAVKSASAKPAPA.

The protein belongs to the cyclin family. Cyclin AB subfamily. As to expression, expressed in the dividing region of the root cap and root apex. Expressed in the intercalary meristem of internodes and in adventitious roots under submergence conditions.

In terms of biological role, involved in the control of the cell cycle at the G2/M (mitosis) transition. The protein is Cyclin-A1-1 (CYCA1-1) of Oryza sativa subsp. japonica (Rice).